The sequence spans 89 residues: Large ribosomal subunit protein bL27 (89 aa).

The segment at 1–21 is disordered; that stretch reads MAHKKAGGSSRNGRDSKGKRL.

This sequence belongs to the bacterial ribosomal protein bL27 family.

The protein is Large ribosomal subunit protein bL27 of Bradyrhizobium sp. (strain ORS 278).